An 89-amino-acid polypeptide reads, in one-letter code: Ribonuclease P protein component 1 (89 aa).

It belongs to the eukaryotic/archaeal RNase P protein component 1 family. As to quaternary structure, consists of a catalytic RNA component and at least 4-5 protein subunits.

It is found in the cytoplasm. It catalyses the reaction Endonucleolytic cleavage of RNA, removing 5'-extranucleotides from tRNA precursor.. In terms of biological role, part of ribonuclease P, a protein complex that generates mature tRNA molecules by cleaving their 5'-ends. This is Ribonuclease P protein component 1 from Thermoplasma volcanium (strain ATCC 51530 / DSM 4299 / JCM 9571 / NBRC 15438 / GSS1).